Here is a 173-residue protein sequence, read N- to C-terminus: Photosystem I assembly protein Ycf3 (173 aa).

3 TPR repeats span residues 35–68 (AYVYYRDGLSAQNAGDYAEALENYEESLKLEESP), 72–105 (SETLKNMAIIYMSNGDEDLALDTYQRALDQNSNQ), and 120–153 (GRTAQEAGLQDEADRLFDRAADVWTQAVRLYPGG).

This sequence belongs to the Ycf3 family.

The protein localises to the cellular thylakoid membrane. Functionally, essential for the assembly of the photosystem I (PSI) complex. May act as a chaperone-like factor to guide the assembly of the PSI subunits. This is Photosystem I assembly protein Ycf3 from Prochlorococcus marinus (strain MIT 9313).